A 341-amino-acid polypeptide reads, in one-letter code: Ferrochelatase (341 aa).

2 residues coordinate Fe cation: histidine 189 and glutamate 293.

It belongs to the ferrochelatase family.

The protein localises to the cytoplasm. It carries out the reaction heme b + 2 H(+) = protoporphyrin IX + Fe(2+). It participates in porphyrin-containing compound metabolism; protoheme biosynthesis; protoheme from protoporphyrin-IX: step 1/1. Catalyzes the ferrous insertion into protoporphyrin IX. The polypeptide is Ferrochelatase (Pseudomonas fluorescens (strain SBW25)).